We begin with the raw amino-acid sequence, 415 residues long: Squalene synthase 1 (415 aa).

The next 2 membrane-spanning stretches (helical) occupy residues 281–301 (AIFR…ALCF) and 391–411 (LIAI…SNLL).

The protein belongs to the phytoene/squalene synthase family. The cofactor is Mg(2+). It depends on Mn(2+) as a cofactor. As to expression, mostly expressed in the shoot apex (buds) and roots, and, to a lower extent, in stems, leaves, flowers and seeds.

The protein localises to the endoplasmic reticulum membrane. The catalysed reaction is 2 (2E,6E)-farnesyl diphosphate + NADH + H(+) = squalene + 2 diphosphate + NAD(+). It catalyses the reaction 2 (2E,6E)-farnesyl diphosphate + NADPH + H(+) = squalene + 2 diphosphate + NADP(+). It participates in terpene metabolism; lanosterol biosynthesis; lanosterol from farnesyl diphosphate: step 1/3. Component of the triterpene saponins (e.g. ginsenosides or panaxosides) and phytosterols biosynthetic pathways. Catalyzes the biosynthesis of squalene. In Panax ginseng (Korean ginseng), this protein is Squalene synthase 1.